We begin with the raw amino-acid sequence, 682 residues long: Histone deacetylase 18 (682 aa).

Residues 59–382 form a histone deacetylase region; the sequence is KVGLVYDETM…SLACVQVLLE (324 aa). The active-site Proton donor/acceptor is histidine 191. The Zn(2+) site is built by aspartate 231, histidine 233, and aspartate 324. The stretch at 430-608 forms a coiled coil; sequence SAERNSADAL…DKELQEDRSR (179 aa).

The protein belongs to the histone deacetylase family. HD type 2 subfamily. Zn(2+) is required as a cofactor. In terms of tissue distribution, expressed in roots, stems, young rosette leaves, flowers and siliques.

The protein localises to the nucleus. It is found in the cytoplasm. The enzyme catalyses N(6)-acetyl-L-lysyl-[histone] + H2O = L-lysyl-[histone] + acetate. Functionally, responsible for the deacetylation of lysine residues on the N-terminal part of the core histones (H2A, H2B, H3 and H4). Histone deacetylation gives a tag for epigenetic repression and plays an important role in transcriptional regulation, cell cycle progression and developmental events. Histone deacetylases act via the formation of large multiprotein complexes. Required for appropriate cellular patterning in the root epidermis. Involved in the differentiation of hair and non-hair cells in the root epidermis. Is not directly involved in the regulation of the expression of pattern genes. Regulates the transcription of certain kinase genes, which are components of a positional information relay system, by changing their histone acetylation status. The polypeptide is Histone deacetylase 18 (Arabidopsis thaliana (Mouse-ear cress)).